A 181-amino-acid chain; its full sequence is Alkyl hydroperoxide reductase AhpD (181 aa).

C131 acts as the Proton donor in catalysis. C131 and C134 are oxidised to a cystine. The active-site Cysteine sulfenic acid (-SOH) intermediate is the C134.

Belongs to the AhpD family.

It catalyses the reaction N(6)-[(R)-dihydrolipoyl]-L-lysyl-[lipoyl-carrier protein] + a hydroperoxide = N(6)-[(R)-lipoyl]-L-lysyl-[lipoyl-carrier protein] + an alcohol + H2O. In terms of biological role, antioxidant protein with alkyl hydroperoxidase activity. Required for the reduction of the AhpC active site cysteine residues and for the regeneration of the AhpC enzyme activity. The chain is Alkyl hydroperoxide reductase AhpD from Bradyrhizobium sp. (strain ORS 278).